The chain runs to 185 residues: Signal peptidase complex subunit 3 (185 aa).

Topologically, residues 1–12 (MIVDTFTNRGST) are cytoplasmic. The helical; Signal-anchor for type II membrane protein transmembrane segment at 13 to 34 (FFSKLSTVLFFLCAVITFQGVI) threads the bilayer. The Lumenal segment spans residues 35-185 (QRREVELDTP…PFHKIITQPK (151 aa)). The N-linked (GlcNAc...) asparagine glycan is linked to asparagine 148.

This sequence belongs to the SPCS3 family. As to quaternary structure, component of the signal peptidase complex (SPC) composed of a catalytic subunit sec11 and three accessory subunits spc1, spc2 and spc3. The complex induces a local thinning of the ER membrane which is used to measure the length of the signal peptide (SP) h-region of protein substrates. This ensures the selectivity of the complex towards h-regions shorter than 18-20 amino acids. SPC associates with the translocon complex.

The protein localises to the endoplasmic reticulum membrane. Its function is as follows. Essential component of the signal peptidase complex (SPC) which catalyzes the cleavage of N-terminal signal sequences from nascent proteins as they are translocated into the lumen of the endoplasmic reticulum. Essential for the SPC catalytic activity, possibly by stabilizing and positioning the active center of the complex close to the lumenal surface. Essential for viability. The sequence is that of Signal peptidase complex subunit 3 (spc3) from Schizosaccharomyces pombe (strain 972 / ATCC 24843) (Fission yeast).